Reading from the N-terminus, the 555-residue chain is 2-succinyl-5-enolpyruvyl-6-hydroxy-3-cyclohexene-1-carboxylate synthase (555 aa).

It belongs to the TPP enzyme family. MenD subfamily. As to quaternary structure, homodimer. Requires Mg(2+) as cofactor. The cofactor is Mn(2+). Thiamine diphosphate serves as cofactor.

It catalyses the reaction isochorismate + 2-oxoglutarate + H(+) = 5-enolpyruvoyl-6-hydroxy-2-succinyl-cyclohex-3-ene-1-carboxylate + CO2. It functions in the pathway quinol/quinone metabolism; 1,4-dihydroxy-2-naphthoate biosynthesis; 1,4-dihydroxy-2-naphthoate from chorismate: step 2/7. It participates in quinol/quinone metabolism; menaquinone biosynthesis. In terms of biological role, catalyzes the thiamine diphosphate-dependent decarboxylation of 2-oxoglutarate and the subsequent addition of the resulting succinic semialdehyde-thiamine pyrophosphate anion to isochorismate to yield 2-succinyl-5-enolpyruvyl-6-hydroxy-3-cyclohexene-1-carboxylate (SEPHCHC). The protein is 2-succinyl-5-enolpyruvyl-6-hydroxy-3-cyclohexene-1-carboxylate synthase of Cronobacter sakazakii (strain ATCC BAA-894) (Enterobacter sakazakii).